The following is a 41-amino-acid chain: Peroxidase 3 (41 aa).

This sequence belongs to the peroxidase family. Classical plant (class III) peroxidase subfamily. It depends on heme b as a cofactor. Ca(2+) serves as cofactor.

The protein resides in the secreted. The enzyme catalyses 2 a phenolic donor + H2O2 = 2 a phenolic radical donor + 2 H2O. Its function is as follows. Removal of H(2)O(2), oxidation of toxic reductants, biosynthesis and degradation of lignin, suberization, auxin catabolism, response to environmental stresses such as wounding, pathogen attack and oxidative stress. These functions might be dependent on each isozyme/isoform in each plant tissue. The protein is Peroxidase 3 of Vitis vinifera (Grape).